A 355-amino-acid chain; its full sequence is Elongation factor Ts (355 aa).

The tract at residues 82-85 (TDFV) is involved in Mg(2+) ion dislocation from EF-Tu.

It belongs to the EF-Ts family.

The protein resides in the cytoplasm. Its function is as follows. Associates with the EF-Tu.GDP complex and induces the exchange of GDP to GTP. It remains bound to the aminoacyl-tRNA.EF-Tu.GTP complex up to the GTP hydrolysis stage on the ribosome. In Helicobacter pylori (strain ATCC 700392 / 26695) (Campylobacter pylori), this protein is Elongation factor Ts (tsf).